A 140-amino-acid polypeptide reads, in one-letter code: Protein ripply1 (140 aa).

Residues 28-31 (WRPW) carry the WRPW motif; required for gro2-binding motif. The ripply homology domain stretch occupies residues 71-106 (HPVRLYWPRSKSFDYLFSDGEALLRNFPVQATINFY). The disordered stretch occupies residues 107–126 (DESDSEDEEESCDEDDESDV).

Belongs to the ripply family. As to quaternary structure, interacts with gro2 via the WRPW motif. Expressed in the embryonic anterior presomitic mesoderm and in newly formed somites.

Its subcellular location is the nucleus. Functionally, plays a role in somitogenesis. Essential for transcriptional repression of the segmental patterning genes, thus terminating the segmentation program in the presomitic mesoderm, and also required for the maintenance of rostrocaudal polarity in somites. The polypeptide is Protein ripply1 (Danio rerio (Zebrafish)).